The following is a 270-amino-acid chain: Bis(5'-nucleosyl)-tetraphosphatase, symmetrical (270 aa).

The protein belongs to the Ap4A hydrolase family.

It carries out the reaction P(1),P(4)-bis(5'-adenosyl) tetraphosphate + H2O = 2 ADP + 2 H(+). Functionally, hydrolyzes diadenosine 5',5'''-P1,P4-tetraphosphate to yield ADP. The protein is Bis(5'-nucleosyl)-tetraphosphatase, symmetrical of Cellvibrio japonicus (strain Ueda107) (Pseudomonas fluorescens subsp. cellulosa).